A 1638-amino-acid chain; its full sequence is ATP-dependent helicase brm (1638 aa).

Disordered regions lie at residues 1–137 (MASP…SQEN) and 201–387 (QMQQ…GMPM). The span at 7-51 (ANSPMPPPQAPSPMAPPSQSPAPSPHSPYPHQQPGPLQGPPPPGH) shows a compositional bias: pro residues. A compositionally biased stretch (low complexity) spans 52-63 (PGAYGHPMQHGP). Residues 121 to 131 (GGPPGGPPPPE) are compositionally biased toward pro residues. Residues 173–208 (HLNGNQVNLLRTQITAYRLLARNKPISMQMQQALQA) enclose the QLQ domain. Positions 201 to 211 (QMQQALQAAQQ) are enriched in low complexity. Pro residues-rich tracts occupy residues 212–231 (QPPP…PPPG), 238–253 (PPVP…PSAG), 263–272 (ASNPYGPPVP), and 279–304 (APPP…PPPI). 2 stretches are compositionally biased toward low complexity: residues 305–317 (QQQQ…QQQS) and 365–382 (PGSQ…QVPP). The HSA domain occupies 501–573 (QKLEAERKRR…EKERMRRLMA (73 aa)). The disordered stretch occupies residues 691 to 730 (DEEDSCGSNDDHKPKVEEQPTATEDATDKAQATGNDEDAK). Residues Ser-695 and Ser-698 each carry the phosphoserine modification. A compositionally biased stretch (basic and acidic residues) spans 699–708 (NDDHKPKVEE). Residues 710-724 (PTATEDATDKAQATG) show a composition bias toward polar residues. The Helicase ATP-binding domain occupies 785 to 950 (VSLYNNNLNG…WALLNFLLPS (166 aa)). An ATP-binding site is contributed by 798 to 805 (DEMGLGKT). Residues 900–903 (DEGH) carry the DEGH box motif. The 162-residue stretch at 1102–1263 (LLDRILPKLK…QKSTGSERQQ (162 aa)) folds into the Helicase C-terminal domain. Residues 1380–1391 (DGAEFDEEEEED) are compositionally biased toward acidic residues. The interval 1380–1412 (DGAEFDEEEEEDDSKRKRRKRKNRKEESDDDSL) is disordered. A phosphoserine mark is found at Ser-1407 and Ser-1411. The Bromo domain maps to 1425 to 1530 (RSKKQMHKIM…KVFVGARQRI (106 aa)). A disordered region spans residues 1544 to 1578 (NTGEAHGNGGSDNSDNDDDDGGDDGSDDEEIATTS). Acidic residues predominate over residues 1557–1574 (SDNDDDDGGDDGSDDEEI). Phosphoserine occurs at positions 1591 and 1594. Residues 1592 to 1604 (LASAPATPTQSSS) are compositionally biased toward low complexity. The interval 1592–1638 (LASAPATPTQSSSNVSSGAATTSKKQTRRKRSQKKYTISDDDDDDMD) is disordered. Residues 1616 to 1625 (KQTRRKRSQK) are compositionally biased toward basic residues.

In terms of assembly, component of the Brahma complex, which is composed of brm, osa, mor, Snr1/Bap45, dalao/Bap111, Bap55, Bap60 and Act42A/Bap47. Interacts with asf1. Associates with the brm-HDAC3-erm repressor complex, composed of brm, HDAC3 and erm. Interacts with erm and HDAC3.

Its subcellular location is the nucleus. The catalysed reaction is ATP + H2O = ADP + phosphate + H(+). In terms of biological role, transcriptional regulator. Acts as a coactivator, assisting one or more dedicated transcriptional activators of ANTC and BXC homeotic gene clusters. Can counteract the repressive effect of Polycomb protein. ATPase subunit of the Brahma complex, a multiprotein complex which is the equivalent of the yeast SWI/SNF complex and acts by remodeling the chromatin by catalyzing an ATP-dependent alteration in the structure of nucleosomal DNA. This complex can both serve as a transcriptional coactivator or corepressor, depending on the context. In type II neuroblast lineage, as part of the Brm remodeling complex, suppresses the formation of ectopic neuroblasts probably through interaction with erm and HDAC3. The chain is ATP-dependent helicase brm (brm) from Drosophila melanogaster (Fruit fly).